The primary structure comprises 906 residues: Protein translocase subunit SecA (906 aa).

ATP is bound by residues glutamine 86, 104–108 (GEGKT), and aspartate 499. Basic and acidic residues predominate over residues 834–847 (KLQKNMRESREDPA). The interval 834–887 (KLQKNMRESREDPAFSKYNAGSSLETDLKPVVSRVDPKDRNPDDPTSWGRVSRN) is disordered. Cysteine 890, cysteine 892, cysteine 901, and histidine 902 together coordinate Zn(2+).

The protein belongs to the SecA family. In terms of assembly, monomer and homodimer. Part of the essential Sec protein translocation apparatus which comprises SecA, SecYEG and auxiliary proteins SecDF-YajC and YidC. The cofactor is Zn(2+).

The protein localises to the cell inner membrane. The protein resides in the cytoplasm. The catalysed reaction is ATP + H2O + cellular proteinSide 1 = ADP + phosphate + cellular proteinSide 2.. Part of the Sec protein translocase complex. Interacts with the SecYEG preprotein conducting channel. Has a central role in coupling the hydrolysis of ATP to the transfer of proteins into and across the cell membrane, serving both as a receptor for the preprotein-SecB complex and as an ATP-driven molecular motor driving the stepwise translocation of polypeptide chains across the membrane. The chain is Protein translocase subunit SecA from Rickettsia felis (strain ATCC VR-1525 / URRWXCal2) (Rickettsia azadi).